The sequence spans 1227 residues: Anion exchange protein 3 (1227 aa).

Over residues 1 to 11 (MANGVIPPPGG) the composition is skewed to pro residues. Disordered regions lie at residues 1-256 (MANG…DEAE), 286-312 (KPSR…KKKK), and 428-497 (NDDK…GDGH). Residues 1–707 (MANGVIPPPG…DLRDALHSQC (707 aa)) lie on the Cytoplasmic side of the membrane. The span at 58 to 75 (DPEKPSRSYSERDFEFHR) shows a compositional bias: basic and acidic residues. 2 stretches are compositionally biased toward basic residues: residues 76-97 (HTSH…KLRR) and 104-113 (RHTRRKRKKE). The segment covering 134-152 (AEEEEEEEEEEEGESEAEP) has biased composition (acidic residues). A phosphoserine mark is found at Ser-167, Ser-170, Ser-175, and Ser-198. A compositionally biased stretch (low complexity) spans 194–215 (QSDQSPQRSGSSPSPRARASRI). Arg-294 is modified (omega-N-methylarginine). Over residues 435–448 (FFPRNPSSSSVNSV) the composition is skewed to low complexity. The segment covering 480–497 (HDPDAKEKPLHMPGGDGH) has biased composition (basic and acidic residues). 4 helical membrane-spanning segments follow: residues 708-730 (VAAV…GLLG), 736-773 (LMGV…LLVF), 793-815 (VWVG…SFLV), and 825-846 (IFAF…YKVF). The tract at residues 708–1227 (VAAVLFIYFA…DEYNELHMPV (520 aa)) is membrane (anion exchange). N-linked (GlcNAc...) asparagine glycosylation is present at Asn-868. Residues 888-905 (ALLSLILMLGTFLIAFFL) traverse the membrane as a helical segment. Topologically, residues 906–920 (RKFRNSRFLGGKARR) are cytoplasmic. Helical transmembrane passes span 921-941 (IIGD…DYSI), 975-997 (PFPP…LIFM), 1023-1044 (LLLI…LTAA), 1078-1123 (VTGV…IQLS), and 1150-1186 (MHLF…TVPL). Cys-1160 carries the S-palmitoyl cysteine lipid modification.

Belongs to the anion exchanger (TC 2.A.31) family. Expressed in the brain.

Its subcellular location is the cell membrane. The enzyme catalyses hydrogencarbonate(in) + chloride(out) = hydrogencarbonate(out) + chloride(in). Its activity is regulated as follows. Inhibited by 4,4'-diisothiocyanatostilbene-2,2'-disulfonic acid (DIDS). In terms of biological role, sodium-independent anion exchanger which mediates the electroneutral exchange of chloride for bicarbonate ions across the cell membrane. May be involved in the regulation of intracellular pH, and the modulation of cardiac action potential. The protein is Anion exchange protein 3 (Slc4a3) of Mus musculus (Mouse).